The primary structure comprises 313 residues: Leucine-rich repeat-containing protein 52 (313 aa).

Positions 1 to 23 are cleaved as a signal peptide; sequence MSLASGPGPGWLLFSFGMGLVSG. In terms of domain architecture, LRRNT spans 24-53; sequence SKCPNNCLCQAQEVICTGKQLTEYPLDIPL. Over 24–244 the chain is Extracellular; the sequence is SKCPNNCLCQ…MCITHLDHKD (221 aa). Intrachain disulfides connect cysteine 26/cysteine 32 and cysteine 30/cysteine 39. LRR repeat units lie at residues 54-75, 78-99, 102-123, 126-148, and 151-172; these read NTRRLFLNENRITSLPAMHLGL, DLVYLDCQNNRIREVMDYTFIG, KLIYLDLSSNNLTSISPFTFSV, NLVQLNIANNPHLLSLHKFTFAN, and SLRYLDLRNTGLQTLDSAALYH. 2 N-linked (GlcNAc...) asparagine glycosylation sites follow: asparagine 112 and asparagine 148. Residues 184–238 form the LRRCT domain; it reads NPWKCNCSFLDFAIFLIVFHMDPSDDLNATCVEPTELTGWPITRVGNPLRYMCIT. 2 disulfide bridges follow: cysteine 188–cysteine 214 and cysteine 190–cysteine 236. Residues asparagine 189 and asparagine 211 are each glycosylated (N-linked (GlcNAc...) asparagine). The chain crosses the membrane as a helical span at residues 245-265; sequence YIFLLLIGFCIFAAGTVAAWL. The Cytoplasmic portion of the chain corresponds to 266–313; sequence TGVCAVLYQNTRHKSSEEDEDEAGTRVEVSRRIFQTQTSSVQEFPQLI.

May interact with KCNU1; this interaction may be required for LRRC52 stability and may change the channel gating properties. Interacts with KCNMA1. N-glycosylated. Mainly expressed in testis and skeletal muscle.

The protein resides in the cell membrane. In terms of biological role, auxiliary protein of the large-conductance, voltage and calcium-activated potassium channel (BK alpha). Modulates gating properties by producing a marked shift in the BK channel's voltage dependence of activation in the hyperpolarizing direction, and in the absence of calcium. KCNU1 channel auxiliary protein. Modulates KCNU1 gating properties. The chain is Leucine-rich repeat-containing protein 52 (LRRC52) from Homo sapiens (Human).